Consider the following 277-residue polypeptide: MKIVLILEYDGRGYCGWQKQPDRISVQSRLESALSRIASSQIQVVAAGRTDAGVHALCQVVHFETHVIRPLTAWVRGANALLPDDISVLWASEVNDDFHARFSATERTYLYYLLSRPARPGIFQGKTGWTHYSLDLEKMQTAARFLIGEHDFSAFRSAECQAKNAIRKLVRLDISQSEQFFVFEFCANAFLHHMVRNILGALIYIGQGKYPPEWIQILLGKRDRTLAAPTFSPDGLYLAGVRYDARWNLPTFNVIRPENVINMIASFKYSQNWAGLR.

Aspartate 51 serves as the catalytic Nucleophile. Position 109 (tyrosine 109) interacts with substrate.

It belongs to the tRNA pseudouridine synthase TruA family. As to quaternary structure, homodimer.

It catalyses the reaction uridine(38/39/40) in tRNA = pseudouridine(38/39/40) in tRNA. In terms of biological role, formation of pseudouridine at positions 38, 39 and 40 in the anticodon stem and loop of transfer RNAs. The polypeptide is tRNA pseudouridine synthase A (Nitrosomonas eutropha (strain DSM 101675 / C91 / Nm57)).